Here is a 339-residue protein sequence, read N- to C-terminus: DNA-directed RNA polymerase subunit alpha (339 aa).

The alpha N-terminal domain (alpha-NTD) stretch occupies residues 1–233 (MVREEVAGST…DLFLPFLHAE (233 aa)). The segment at 264–339 (KKGIPLNCIF…IDLLKNKLSF (76 aa)) is alpha C-terminal domain (alpha-CTD).

It belongs to the RNA polymerase alpha chain family. As to quaternary structure, in plastids the minimal PEP RNA polymerase catalytic core is composed of four subunits: alpha, beta, beta', and beta''. When a (nuclear-encoded) sigma factor is associated with the core the holoenzyme is formed, which can initiate transcription.

It localises to the plastid. Its subcellular location is the chloroplast. It carries out the reaction RNA(n) + a ribonucleoside 5'-triphosphate = RNA(n+1) + diphosphate. Functionally, DNA-dependent RNA polymerase catalyzes the transcription of DNA into RNA using the four ribonucleoside triphosphates as substrates. The protein is DNA-directed RNA polymerase subunit alpha of Aegilops uniaristata (Goatgrass).